The chain runs to 653 residues: Leishmanolysin homolog (653 aa).

Residues 1–44 (MHAPPTATRRSGPRRTHGIMARLVRLAAGVLVVTLVIGALTALS) form the signal peptide. Positions 45 to 113 (ADDAKTHPHK…ALAGDSAPDV (69 aa)) are cleaved as a propeptide — activation peptide. 2 cysteine pairs are disulfide-bonded: cysteine 138–cysteine 155 and cysteine 203–cysteine 242. Residue histidine 276 coordinates Zn(2+). Residue glutamate 277 is part of the active site. Zn(2+) is bound by residues histidine 280 and histidine 346. Cystine bridges form between cysteine 326–cysteine 398, cysteine 405–cysteine 468, cysteine 418–cysteine 437, cysteine 427–cysteine 502, cysteine 479–cysteine 524, cysteine 529–cysteine 579, and cysteine 549–cysteine 572. Asparagine 383 and asparagine 409 each carry an N-linked (GlcNAc...) asparagine glycan. Asparagine 569 carries an N-linked (GlcNAc...) asparagine glycan. The interval 590–631 (ESMTNSGSGSSRPAPVEPSGSGSGSSAATTAPSPTRDGSAAA) is disordered. Positions 591–600 (SMTNSGSGSS) are enriched in polar residues. Residues 607–631 (PSGSGSGSSAATTAPSPTRDGSAAA) show a composition bias toward low complexity. Residue serine 628 is the site of GPI-anchor amidated serine attachment. The propeptide at 629–653 (AAADRIAPRTAAVALLALAVAAACV) is removed in mature form.

The protein belongs to the peptidase M8 family. It depends on Zn(2+) as a cofactor.

Its subcellular location is the cell membrane. It catalyses the reaction Preference for hydrophobic residues at P1 and P1' and basic residues at P2' and P3'. A model nonapeptide is cleaved at -Ala-Tyr-|-Leu-Lys-Lys-.. Functionally, plays an integral role during the infection of macrophages in the mammalian host. This is Leishmanolysin homolog (gp63) from Crithidia fasciculata.